A 483-amino-acid polypeptide reads, in one-letter code: Serine/threonine-protein kinase BSK4 (483 aa).

Gly2 carries N-myristoyl glycine lipidation. In terms of domain architecture, Protein kinase spans 56 to 322 (ENVVSEHGET…DTEVLSHVLM (267 aa)). ATP contacts are provided by residues 62–70 (HGETAPNVV) and Lys84. Asp178 functions as the Proton acceptor in the catalytic mechanism.

The protein belongs to the protein kinase superfamily. Ser/Thr protein kinase family.

Its subcellular location is the cell membrane. It carries out the reaction L-seryl-[protein] + ATP = O-phospho-L-seryl-[protein] + ADP + H(+). The catalysed reaction is L-threonyl-[protein] + ATP = O-phospho-L-threonyl-[protein] + ADP + H(+). Its function is as follows. Probable serine/threonine kinase that acts as a positive regulator of brassinosteroid (BR) signaling downstream of the receptor kinase BRI1. Functions redundantly with BSK3, BSK6, BSK7 and BSK8. This Arabidopsis thaliana (Mouse-ear cress) protein is Serine/threonine-protein kinase BSK4.